Consider the following 310-residue polypeptide: Fe-S cluster assembly protein dre2 (310 aa).

The segment at 1-130 is N-terminal SAM-like domain; that stretch reads MSGRTLLLSP…KPDIEDMRAV (130 aa). The interval 131 to 203 is linker; that stretch reads PLRLGRKKHD…EDLLDGSELA (73 aa). The [2Fe-2S] cluster site is built by Cys212, Cys223, Cys226, and Cys228. The tract at residues 212–228 is fe-S binding site A; the sequence is CRPKAGRRRRACKDCTC. Residues Cys273, Cys276, Cys284, and Cys287 each contribute to the [4Fe-4S] cluster site. 2 consecutive short sequence motifs (cx2C motif) follow at residues 273–276 and 284–287; these read CGNC and CEGC. Positions 273 to 287 are fe-S binding site B; sequence CGNCSLGDAFRCEGC.

The protein belongs to the anamorsin family. In terms of assembly, monomer. Interacts with tah18. Interacts with mia40. [2Fe-2S] cluster serves as cofactor. Requires [4Fe-4S] cluster as cofactor.

Its subcellular location is the cytoplasm. It is found in the mitochondrion intermembrane space. Its function is as follows. Component of the cytosolic iron-sulfur (Fe-S) protein assembly (CIA) machinery required for the maturation of extramitochondrial Fe-S proteins. Part of an electron transfer chain functioning in an early step of cytosolic Fe-S biogenesis, facilitating the de novo assembly of a [4Fe-4S] cluster on the scaffold complex cfd1-nbp35. Electrons are transferred to dre2 from NADPH via the FAD- and FMN-containing protein tah18. Tah18-dre2 are also required for the assembly of the diferric tyrosyl radical cofactor of ribonucleotide reductase (RNR), probably by providing electrons for reduction during radical cofactor maturation in the catalytic small subunit rnr2. The polypeptide is Fe-S cluster assembly protein dre2 (Aspergillus clavatus (strain ATCC 1007 / CBS 513.65 / DSM 816 / NCTC 3887 / NRRL 1 / QM 1276 / 107)).